The sequence spans 233 residues: Protein Thf1 (233 aa).

Residues 183 to 204 (DKFSKDLELYRSNLDKMTQALA) are a coiled coil. The interval 212–233 (ADRKKREQRQQQASTPVAPPNE) is disordered.

Belongs to the THF1 family.

Functionally, may be involved in photosynthetic membrane biogenesis. This is Protein Thf1 from Nostoc sp. (strain PCC 7120 / SAG 25.82 / UTEX 2576).